The primary structure comprises 168 residues: Phosphopantetheine adenylyltransferase (168 aa).

T9 provides a ligand contact to substrate. ATP-binding positions include 9–10 and H17; that span reads TF. Substrate is bound by residues K41, L73, and R87. ATP is bound by residues 88–90, E98, and 123–129; these read GLR and YQFISGT.

This sequence belongs to the bacterial CoaD family. As to quaternary structure, homohexamer. It depends on Mg(2+) as a cofactor.

Its subcellular location is the cytoplasm. The enzyme catalyses (R)-4'-phosphopantetheine + ATP + H(+) = 3'-dephospho-CoA + diphosphate. It participates in cofactor biosynthesis; coenzyme A biosynthesis; CoA from (R)-pantothenate: step 4/5. In terms of biological role, reversibly transfers an adenylyl group from ATP to 4'-phosphopantetheine, yielding dephospho-CoA (dPCoA) and pyrophosphate. This is Phosphopantetheine adenylyltransferase from Paraburkholderia phymatum (strain DSM 17167 / CIP 108236 / LMG 21445 / STM815) (Burkholderia phymatum).